Here is a 639-residue protein sequence, read N- to C-terminus: Serine/threonine-protein kinase PAK mbt (639 aa).

Residues 11–24 (ISMPSNFEHRVHTG) enclose the CRIB domain. A linker region spans residues 25 to 367 (FDKRENKYVG…VVSAGDPREN (343 aa)). Disordered stretches follow at residues 79–195 (HHNN…SLLY) and 222–345 (RSNL…QDQR). Low complexity-rich tracts occupy residues 91 to 129 (NSSS…ETGG), 138 to 159 (VARS…ANVP), 227 to 241 (PPSG…QTSP), and 274 to 295 (QQQQ…NPLH). A compositionally biased stretch (basic residues) spans 296 to 308 (PHAHPHPHHHQHL). Residues 309–331 (AKSASRASSSSGGASSAAQQASG) are compositionally biased toward low complexity. Residues 368 to 619 (LDHFNKIGEG…AAELLAHPFL (252 aa)) enclose the Protein kinase domain. ATP is bound by residues 374 to 382 (IGEGSTGTV) and K397. The Proton acceptor role is filled by D487. S521 bears the Phosphoserine mark. At T525 the chain carries Phosphothreonine.

The protein belongs to the protein kinase superfamily. STE Ser/Thr protein kinase family. STE20 subfamily. As to quaternary structure, interacts tightly with GTP-bound but not GDP-bound Cdc42 and weakly with Rac1. The cofactor is Mg(2+). Autophosphorylated when activated by Cdc42. Expressed in adult brain and eye. High levels detected in developing photoreceptor cells and future bristle cells, and lower levels in cone and pigment cells, as detected in third instar eye imaginal disks (at protein level).

The protein localises to the cell junction. It localises to the adherens junction. The protein resides in the cell membrane. It carries out the reaction L-seryl-[protein] + ATP = O-phospho-L-seryl-[protein] + ADP + H(+). It catalyses the reaction L-threonyl-[protein] + ATP = O-phospho-L-threonyl-[protein] + ADP + H(+). Functionally, involved in neurogenesis of the adult central nervous system, and together with Cdc42, regulates photoreceptor cell morphogenesis. Phosphorylates exogenous substrates when activated by Cdc42. The chain is Serine/threonine-protein kinase PAK mbt from Drosophila melanogaster (Fruit fly).